Here is a 417-residue protein sequence, read N- to C-terminus: Calreticulin (417 aa).

An N-terminal signal peptide occupies residues 1 to 17 (MLLPVPLLLGLVGLAAA). The tract at residues 18 to 197 (EPTIYFKEQF…NSQVESGSLE (180 aa)) is N-domain. Residues Gln-26, Lys-62, and Lys-64 each coordinate Ca(2+). At Lys-64 the chain carries N6-(2-hydroxyisobutyryl)lysine. Positions 109, 111, 128, and 135 each coordinate an alpha-D-glucoside. Cys-137 and Cys-163 are disulfide-bonded. N6-acetyllysine is present on Lys-159. A 1-1 repeat occupies 191-202 (VESGSLEDDWDF). The segment at 191–255 (VESGSLEDDW…DAKKPEDWDE (65 aa)) is 4 X approximate repeats. The disordered stretch occupies residues 193–277 (SGSLEDDWDF…NPEYKGEWKP (85 aa)). Positions 198–308 (DDWDFLPPKK…YSPDSNIYAY (111 aa)) are P-domain. A compositionally biased stretch (basic and acidic residues) spans 207-251 (KIKDPDAVKPEDWDERAKIDDPTDSKPEDWDKPEHIPDPDAKKPE). Position 209 is an N6-acetyllysine (Lys-209). 6 tandem repeats follow at residues 210-221 (DPDAVKPEDWDE), 227-238 (DPTDSKPEDWDK), 244-255 (DPDAKKPEDWDE), 259-269 (GEWEPPVIQNP), 273-283 (GEWKPRQIDNP), and 287-297 (GTWIHPEIDNP). Positions 237–270 (DKPEHIPDPDAKKPEDWDEEMDGEWEPPVIQNPE) are interaction with PPIB. The segment covering 252–261 (DWDEEMDGEW) has biased composition (acidic residues). The tract at residues 259-297 (GEWEPPVIQNPEYKGEWKPRQIDNPDYKGTWIHPEIDNP) is 3 X approximate repeats. Positions 309–417 (ENFAVLGLDL…AAAGQAKDEL (109 aa)) are C-domain. Asp-317 contributes to the an alpha-D-glucoside binding site. Position 328 (Asp-328) interacts with Ca(2+). Positions 350–417 (TKAAEKQMKD…AAAGQAKDEL (68 aa)) are disordered. Residues 352–379 (AAEKQMKDKQDEEQRLKEEEEEKKRKEE) show a composition bias toward basic and acidic residues. Residues 380-408 (EEVDKEDEEDKDEDEEEEDEKEEEEEEDA) are compositionally biased toward acidic residues. Positions 414 to 417 (KDEL) match the Prevents secretion from ER motif.

Belongs to the calreticulin family. Monomer. Component of an EIF2 complex at least composed of CELF1/CUGBP1, CALR, CALR3, EIF2S1, EIF2S2, HSP90B1 and HSPA5. Interacts with PDIA3/ERp57 and SPACA9. Interacts with TRIM21. Interacts with NR3C1. Interacts with PPIB. Interacts (via P-domain) with PDIA5. Interacts with CLCC1. In terms of tissue distribution, in blastocyst expressed in all blastomeres (at protein level). In embryos, expressed in spleen, kidney, liver, fat, muscle, ovary, granulosa cells and cumulus cells.

The protein localises to the endoplasmic reticulum lumen. It is found in the cytoplasm. Its subcellular location is the cytosol. It localises to the secreted. The protein resides in the extracellular space. The protein localises to the extracellular matrix. It is found in the cell surface. Its subcellular location is the sarcoplasmic reticulum lumen. It localises to the cytoplasmic vesicle. The protein resides in the secretory vesicle. The protein localises to the cortical granule. It is found in the cytolytic granule. Calcium-binding chaperone that promotes folding, oligomeric assembly and quality control in the endoplasmic reticulum (ER) via the calreticulin/calnexin cycle. This lectin interacts transiently with almost all of the monoglucosylated glycoproteins that are synthesized in the ER. Interacts with the DNA-binding domain of NR3C1 and mediates its nuclear export. Involved in maternal gene expression regulation. May participate in oocyte maturation via the regulation of calcium homeostasis. Present in the cortical granules of non-activated oocytes, is exocytosed during the cortical reaction in response to oocyte activation and might participate in the block to polyspermy. The protein is Calreticulin (CALR) of Sus scrofa (Pig).